Consider the following 422-residue polypeptide: Replication factor C large subunit (422 aa).

63–70 (GPPGVGKT) is an ATP binding site.

It belongs to the activator 1 small subunits family. RfcL subfamily. Heteromultimer composed of small subunits (RfcS) and large subunits (RfcL).

Functionally, part of the RFC clamp loader complex which loads the PCNA sliding clamp onto DNA. In Pyrobaculum arsenaticum (strain DSM 13514 / JCM 11321 / PZ6), this protein is Replication factor C large subunit.